Here is a 382-residue protein sequence, read N- to C-terminus: MGIKGLSQVIADNAPSAIKVNEMKAFFGRTVAIDASMCLYQFLIAVRQDGSQLQSEDGETTSHLMGMLNRTVRMFENGVKPVYVFDGKPPDMKGGELEKRSERRAEAEKALTEAKEKGDVKEAEKFERRLVKVTKQQNDEAKRLLGLMGIPVVEAPCEAEAQCAHLVKAGKVFGTVTEDMDALTFGSTVLLRHFLAPVAKKIPIKEFNLSLALEEMKLSVEEFIDLCILLGCDYCGTIRGVGPKKAVELIRQHKNIETILENIDQNKYPPPEDWPYKRARELFLNPEVTKPEEVELTWKEADVEGVIQFLCGEKNFNEERIRNALAKLKTSRKSGTQGRIDSFFGNSTKVTCVTAATKRKAEEAEKAKKGAKKGGPPKKRAK.

The N-domain stretch occupies residues 1 to 104 (MGIKGLSQVI…GELEKRSERR (104 aa)). Residue Asp34 participates in Mg(2+) binding. DNA contacts are provided by Arg47 and Arg70. 5 residues coordinate Mg(2+): Asp86, Glu158, Glu160, Asp179, and Asp181. The segment at 122–253 (EAEKFERRLV…KKAVELIRQH (132 aa)) is I-domain. Glu158 is a binding site for DNA. Positions 231 and 233 each coordinate DNA. Mg(2+) is bound at residue Asp233. The tract at residues 336–344 (TQGRIDSFF) is interaction with PCNA. Residues 358 to 382 (KRKAEEAEKAKKGAKKGGPPKKRAK) form a disordered region. Basic and acidic residues predominate over residues 359 to 368 (RKAEEAEKAK). The segment covering 369-382 (KGAKKGGPPKKRAK) has biased composition (basic residues).

Belongs to the XPG/RAD2 endonuclease family. FEN1 subfamily. Interacts with PCNA. Three molecules of crn-1 bind to one PCNA trimer with each molecule binding to one PCNA monomer. PCNA stimulates the nuclease activity without altering cleavage specificity. Interacts with cps-6. Requires Mg(2+) as cofactor. Phosphorylated. Phosphorylation upon DNA damage induces relocalization to the nuclear plasma.

It is found in the nucleus. The protein localises to the nucleolus. Its subcellular location is the nucleoplasm. It localises to the mitochondrion. Structure-specific nuclease with 5'-flap endonuclease and 5'-3' exonuclease activities involved in DNA replication and repair. During DNA replication, cleaves the 5'-overhanging flap structure that is generated by displacement synthesis when DNA polymerase encounters the 5'-end of a downstream Okazaki fragment. It enters the flap from the 5'-end and then tracks to cleave the flap base, leaving a nick for ligation. Also involved in the long patch base excision repair (LP-BER) pathway, by cleaving within the apurinic/apyrimidinic (AP) site-terminated flap. Acts as a genome stabilization factor that prevents flaps from equilibrating into structures that lead to duplications and deletions. Also possesses 5'-3' exonuclease activity on nicked or gapped double-stranded DNA, and exhibits RNase H activity. Also involved in replication and repair of rDNA and in repairing mitochondrial DNA. Can associate and cooperate with cps-6 to promote stepwise DNA fragmentation, utilizing the endonuclease activity of cps-6 and both of its own 5'-3' exonuclease activity and gap-dependent endonuclease activity. May play a critical role in switching the state of cells from DNA replication/repair to DNA degradation during apoptosis. The chain is Flap endonuclease 1 from Caenorhabditis elegans.